The sequence spans 432 residues: Enolase (432 aa).

Residue Q163 participates in (2R)-2-phosphoglycerate binding. Residue E205 is the Proton donor of the active site. Positions 242, 288, and 315 each coordinate Mg(2+). (2R)-2-phosphoglycerate-binding residues include K340, R369, S370, and K391. K340 functions as the Proton acceptor in the catalytic mechanism.

It belongs to the enolase family. Homodimer. Requires Mg(2+) as cofactor.

It localises to the cytoplasm. The protein localises to the secreted. The protein resides in the cell surface. It carries out the reaction (2R)-2-phosphoglycerate = phosphoenolpyruvate + H2O. Its pathway is carbohydrate degradation; glycolysis; pyruvate from D-glyceraldehyde 3-phosphate: step 4/5. With respect to regulation, the covalent binding to the substrate causes inactivation of the enzyme, and possibly serves as a signal for the export of the protein. In terms of biological role, catalyzes the reversible conversion of 2-phosphoglycerate (2-PG) into phosphoenolpyruvate (PEP). It is essential for the degradation of carbohydrates via glycolysis. This Enterococcus hirae protein is Enolase.